The following is a 147-amino-acid chain: UPF0306 protein YhbP (147 aa).

Belongs to the UPF0306 family.

This chain is UPF0306 protein YhbP, found in Escherichia coli (strain SMS-3-5 / SECEC).